Consider the following 227-residue polypeptide: Ubiquitin domain-containing protein 1 (227 aa).

Residues 1-42 (MGNCVGRQRRERPAAPGHPRKRAGRNEPLKKERLKWKSDYPM) form a disordered region. A compositionally biased stretch (basic and acidic residues) spans 24 to 38 (GRNEPLKKERLKWKS). One can recognise a Ubiquitin-like domain in the interval 149 to 224 (FPLKVRLSTG…IQVIINQPPP (76 aa)).

Interacts with UBTD1.

Its function is as follows. May be involved in the regulation of cellular senescence through a positive feedback loop with TP53. Is a TP53 downstream target gene that increases the stability of TP53 protein by promoting the ubiquitination and degradation of MDM2. This Mus musculus (Mouse) protein is Ubiquitin domain-containing protein 1 (Ubtd1).